The following is a 117-amino-acid chain: Large ribosomal subunit protein bL20c (117 aa).

The protein belongs to the bacterial ribosomal protein bL20 family.

The protein resides in the plastid. The protein localises to the chloroplast. Its function is as follows. Binds directly to 23S ribosomal RNA and is necessary for the in vitro assembly process of the 50S ribosomal subunit. It is not involved in the protein synthesizing functions of that subunit. The protein is Large ribosomal subunit protein bL20c of Populus trichocarpa (Western balsam poplar).